We begin with the raw amino-acid sequence, 356 residues long: Mannonate dehydratase (356 aa).

Belongs to the mannonate dehydratase family. Requires Fe(2+) as cofactor. The cofactor is Mn(2+).

It carries out the reaction D-mannonate = 2-dehydro-3-deoxy-D-gluconate + H2O. Its pathway is carbohydrate metabolism; pentose and glucuronate interconversion. In terms of biological role, catalyzes the dehydration of D-mannonate. This Levilactobacillus brevis (strain ATCC 367 / BCRC 12310 / CIP 105137 / JCM 1170 / LMG 11437 / NCIMB 947 / NCTC 947) (Lactobacillus brevis) protein is Mannonate dehydratase.